Here is a 433-residue protein sequence, read N- to C-terminus: Glutamate-1-semialdehyde 2,1-aminomutase (433 aa).

The residue at position 266 (lysine 266) is an N6-(pyridoxal phosphate)lysine.

It belongs to the class-III pyridoxal-phosphate-dependent aminotransferase family. HemL subfamily. Homodimer. It depends on pyridoxal 5'-phosphate as a cofactor.

It localises to the cytoplasm. The enzyme catalyses (S)-4-amino-5-oxopentanoate = 5-aminolevulinate. It functions in the pathway porphyrin-containing compound metabolism; protoporphyrin-IX biosynthesis; 5-aminolevulinate from L-glutamyl-tRNA(Glu): step 2/2. In Psychrobacter arcticus (strain DSM 17307 / VKM B-2377 / 273-4), this protein is Glutamate-1-semialdehyde 2,1-aminomutase.